The chain runs to 122 residues: Ribosome-binding factor A (122 aa).

It belongs to the RbfA family. Monomer. Binds 30S ribosomal subunits, but not 50S ribosomal subunits or 70S ribosomes.

The protein resides in the cytoplasm. Its function is as follows. One of several proteins that assist in the late maturation steps of the functional core of the 30S ribosomal subunit. Associates with free 30S ribosomal subunits (but not with 30S subunits that are part of 70S ribosomes or polysomes). Required for efficient processing of 16S rRNA. May interact with the 5'-terminal helix region of 16S rRNA. This chain is Ribosome-binding factor A, found in Moorella thermoacetica (strain ATCC 39073 / JCM 9320).